Reading from the N-terminus, the 290-residue chain is MLKRYLSITKPGIIFGNLISVAAGFFLAAKSEPASFLLLLTTLVGVGLVIASGCVVNNIFDRDIDQKMKRTQNRELVMGNINTDAAFVYALVLLLNGTALLFQVVNPLSAVVVLLGYVFYVFFYTMWYKRNSVYGTLVGSISGAVPPLVGYLAVTNYISLEATLLFVMFCLWQMPHSYAIAMFRMQDYRDAGIPVLPVKEGIAKAHQHMKAYVVAFGVVAIGLFMLGEAGYEYLAVSAAVCFMWTRVTFQKVDYNNYIQWSKSVFKMSLLVVMGISGVLGLELIPLPFIH.

The next 8 helical transmembrane spans lie at 8–28 (ITKP…FFLA), 36–56 (FLLL…GCVV), 85–105 (AAFV…FQVV), 108–128 (LSAV…TMWY), 131–151 (NSVY…LVGY), 152–172 (LAVT…FCLW), 211–231 (AYVV…EAGY), and 269–289 (LLVV…LPFI).

It belongs to the UbiA prenyltransferase family. Protoheme IX farnesyltransferase subfamily.

The protein localises to the cell inner membrane. It carries out the reaction heme b + (2E,6E)-farnesyl diphosphate + H2O = Fe(II)-heme o + diphosphate. Its pathway is porphyrin-containing compound metabolism; heme O biosynthesis; heme O from protoheme: step 1/1. Functionally, converts heme B (protoheme IX) to heme O by substitution of the vinyl group on carbon 2 of heme B porphyrin ring with a hydroxyethyl farnesyl side group. The polypeptide is Protoheme IX farnesyltransferase 1 (Vibrio campbellii (strain ATCC BAA-1116)).